Here is a 72-residue protein sequence, read N- to C-terminus: MAVFKVFYQHNRDEVIVRENTQSLYVEAQTEEQVRRYLKDRNFNIEFITKLEGAHLDYEKENSEHFNVEIAK.

It belongs to the RNA polymerase subunit epsilon family. In terms of assembly, RNAP is composed of a core of 2 alpha, a beta and a beta' subunit. The core is associated with a delta subunit, and at least one of epsilon or omega. When a sigma factor is associated with the core the holoenzyme is formed, which can initiate transcription.

The enzyme catalyses RNA(n) + a ribonucleoside 5'-triphosphate = RNA(n+1) + diphosphate. A non-essential component of RNA polymerase (RNAP). This is DNA-directed RNA polymerase subunit epsilon from Staphylococcus aureus (strain JH1).